Consider the following 417-residue polypeptide: MERPEPVVPPSWRERLRCFPWRNTAHTLRERFREDRLGVTASSLTFTTVLALVPFFTVALALFTAFPIFSRVQIVLERWLIDSLIPETIARQVLGYLTQFASKASQLGMAGFSILVITAVALILTIDRTLNNIWRVRQLRPLGQRVLIYWAAITLGPLVLGLSLVLSSYVMSASRGLVNALPEGLRFIFDSIEYLALAAGMAGLYHYVPNTAVRWRHAWVGGLFVATCMELAKKALGLYLASVPTYSVIYGTFATLPILLIWIYMAWIIVLLGAVVTAYLPIVMAGVQRMPGQQGWQFEMAVEILQYLEQERESPAKGLYASDLARRLHVDWQQIDPVLQALSVLDWVGTVQAPGVAAGSEGTEPRYMLLVDPQHTPLAPLVERLLLAPSAAVQPLWERTGLAGMTLASLLESRPRP.

6 helical membrane-spanning segments follow: residues 49 to 69, 106 to 126, 146 to 166, 187 to 207, 235 to 255, and 256 to 276; these read VLAL…FPIF, QLGM…ILTI, VLIY…SLVL, FIFD…LYHY, ALGL…TFAT, and LPIL…GAVV.

The protein belongs to the UPF0761 family.

The protein localises to the cell inner membrane. The protein is UPF0761 membrane protein Daci_4966 of Delftia acidovorans (strain DSM 14801 / SPH-1).